A 202-amino-acid polypeptide reads, in one-letter code: Endothelin-1 (202 aa).

The N-terminal stretch at 1-25 (MDYFPMIFALLFVAFQGAPEAAVLG) is a signal peptide. A propeptide spanning residues 26 to 50 (TELSTGAESGGERPVPTTPWRPRRS) is cleaved from the precursor. The interval 29–48 (STGAESGGERPVPTTPWRPR) is disordered. Cystine bridges form between Cys53-Cys67 and Cys55-Cys63. The propeptide occupies 74-202 (VNTPEHVVPY…DKKVIYSRAH (129 aa)). Residues 110–124 (CQCASQTDKKCQNFC) form an endothelin-like region.

Belongs to the endothelin/sarafotoxin family.

The protein resides in the secreted. Its function is as follows. Endothelins are endothelium-derived vasoconstrictor peptides. Probable ligand for G-protein coupled receptors EDNRA and EDNRB which activates PTK2B, BCAR1, BCAR3 and, GTPases RAP1 and RHOA cascade in glomerular mesangial cells. Also binds the DEAR/FBXW7-AS1 receptor. Promotes mesenteric arterial wall remodeling via activation of ROCK signaling and subsequent colocalization of NFATC3 with F-actin filaments. NFATC3 then translocates to the nucleus where it subsequently promotes the transcription of the smooth muscle hypertrophy and differentiation marker ACTA2. The protein is Endothelin-1 (EDN1) of Ovis aries (Sheep).